The sequence spans 375 residues: Protein abhd-3.2 (375 aa).

An AB hydrolase-1 domain is found at 108–203 (PIVVFLPGIT…ILWNYLAMTG (96 aa)). Residues Ser-189, Asp-315, and His-344 each act as charge relay system in the active site.

The protein belongs to the AB hydrolase superfamily. AB hydrolase 4 family.

The protein is Protein abhd-3.2 of Caenorhabditis elegans.